Consider the following 367-residue polypeptide: Homoserine O-acetyltransferase (367 aa).

The region spanning Asn-44–Glu-350 is the AB hydrolase-1 domain. Ser-150 serves as the catalytic Nucleophile. Arg-217 provides a ligand contact to substrate. Active-site residues include Asp-311 and His-344. Asp-345 is a substrate binding site.

It belongs to the AB hydrolase superfamily. MetX family. As to quaternary structure, homodimer.

The protein resides in the cytoplasm. It carries out the reaction L-homoserine + acetyl-CoA = O-acetyl-L-homoserine + CoA. It participates in amino-acid biosynthesis; L-methionine biosynthesis via de novo pathway; O-acetyl-L-homoserine from L-homoserine: step 1/1. Its function is as follows. Transfers an acetyl group from acetyl-CoA to L-homoserine, forming acetyl-L-homoserine. The chain is Homoserine O-acetyltransferase from Geotalea daltonii (strain DSM 22248 / JCM 15807 / FRC-32) (Geobacter daltonii).